Here is a 535-residue protein sequence, read N- to C-terminus: MFLSRVNPTRFPPFVASRRLFSASASAASLQQYCTEKPPIKPWPQRLFPKRLVSMITQQQNIDLALQIFLYAGKSHPGFTHNYDTYHSILFKLSRARAFDPVESLMADLRNSYPPIKCGENLFIDLLRNYGLAGRYESSMRIFLRIPDFGVKRSVRSLNTLLNVLIQNQRFDLVHAMFKNSKESFGITPNIFTCNLLVKALCKKNDIESAYKVLDEIPSMGLVPNLVTYTTILGGYVARGDMESAKRVLEEMLDRGWYPDATTYTVLMDGYCKLGRFSEAATVMDDMEKNEIEPNEVTYGVMIRALCKEKKSGEARNMFDEMLERSFMPDSSLCCKVIDALCEDHKVDEACGLWRKMLKNNCMPDNALLSTLIHWLCKEGRVTEARKLFDEFEKGSIPSLLTYNTLIAGMCEKGELTEAGRLWDDMYERKCKPNAFTYNVLIEGLSKNGNVKEGVRVLEEMLEIGCFPNKTTFLILFEGLQKLGKEEDAMKIVSMAVMNGKVDKESWELFLKKFAGELDKGVLPLKELLHEISVS.

The transit peptide at 1–28 directs the protein to the mitochondrion; the sequence is MFLSRVNPTRFPPFVASRRLFSASASAA. 12 PPR repeats span residues 82 to 112, 119 to 153, 154 to 189, 190 to 224, 225 to 259, 260 to 294, 295 to 329, 330 to 364, 365 to 395, 399 to 433, 434 to 468, and 469 to 503; these read NYDTYHSILFKLSRARAFDPVESLMADLRNS, GENLFIDLLRNYGLAGRYESSMRIFLRIPDFGVKR, SVRSLNTLLNVLIQNQRFDLVHAMFKNSKESFGITP, NIFTCNLLVKALCKKNDIESAYKVLDEIPSMGLVP, NLVTYTTILGGYVARGDMESAKRVLEEMLDRGWYP, DATTYTVLMDGYCKLGRFSEAATVMDDMEKNEIEP, NEVTYGVMIRALCKEKKSGEARNMFDEMLERSFMP, DSSLCCKVIDALCEDHKVDEACGLWRKMLKNNCMP, DNALLSTLIHWLCKEGRVTEARKLFDEFEKG, SLLTYNTLIAGMCEKGELTEAGRLWDDMYERKCKP, NAFTYNVLIEGLSKNGNVKEGVRVLEEMLEIGCFP, and NKTTFLILFEGLQKLGKEEDAMKIVSMAVMNGKVD.

This sequence belongs to the PPR family. P subfamily.

It is found in the mitochondrion. The protein is Pentatricopeptide repeat-containing protein At5g16420, mitochondrial of Arabidopsis thaliana (Mouse-ear cress).